The following is a 563-amino-acid chain: Arginine--tRNA ligase (563 aa).

The short motif at 120 to 130 is the 'HIGH' region element; it reads PNIAKPFHIGH.

It belongs to the class-I aminoacyl-tRNA synthetase family. Monomer.

The protein localises to the cytoplasm. It carries out the reaction tRNA(Arg) + L-arginine + ATP = L-arginyl-tRNA(Arg) + AMP + diphosphate. The protein is Arginine--tRNA ligase of Clostridium botulinum (strain 657 / Type Ba4).